We begin with the raw amino-acid sequence, 570 residues long: Hydroxylamine reductase (570 aa).

Residues C5, C8, C17, and C23 each coordinate [4Fe-4S] cluster. The hybrid [4Fe-2O-2S] cluster site is built by H266, E290, C334, C425, C453, C478, E513, and K515. C425 carries the cysteine persulfide modification.

Belongs to the HCP family. The cofactor is [4Fe-4S] cluster. It depends on hybrid [4Fe-2O-2S] cluster as a cofactor.

The protein resides in the cytoplasm. It carries out the reaction A + NH4(+) + H2O = hydroxylamine + AH2 + H(+). Its function is as follows. Catalyzes the reduction of hydroxylamine to form NH(3) and H(2)O. This Clostridium botulinum (strain Okra / Type B1) protein is Hydroxylamine reductase.